The following is a 217-amino-acid chain: ATP-dependent Clp protease proteolytic subunit 3 (217 aa).

Residues 1-13 are compositionally biased toward low complexity; sequence MSPFTAGPAPART. Residues 1-23 are disordered; the sequence is MSPFTAGPAPARTPRAEEGDTPA. The Nucleophile role is filled by S108. H133 is a catalytic residue.

Belongs to the peptidase S14 family. Fourteen ClpP subunits assemble into 2 heptameric rings which stack back to back to give a disk-like structure with a central cavity, resembling the structure of eukaryotic proteasomes.

Its subcellular location is the cytoplasm. The enzyme catalyses Hydrolysis of proteins to small peptides in the presence of ATP and magnesium. alpha-casein is the usual test substrate. In the absence of ATP, only oligopeptides shorter than five residues are hydrolyzed (such as succinyl-Leu-Tyr-|-NHMec, and Leu-Tyr-Leu-|-Tyr-Trp, in which cleavage of the -Tyr-|-Leu- and -Tyr-|-Trp bonds also occurs).. Functionally, cleaves peptides in various proteins in a process that requires ATP hydrolysis. Has a chymotrypsin-like activity. Plays a major role in the degradation of misfolded proteins. This is ATP-dependent Clp protease proteolytic subunit 3 from Streptomyces coelicolor (strain ATCC BAA-471 / A3(2) / M145).